The sequence spans 277 residues: Large ribosomal subunit protein uL2 (277 aa).

Residues Gly-222–Lys-277 form a disordered region.

This sequence belongs to the universal ribosomal protein uL2 family. Part of the 50S ribosomal subunit. Forms a bridge to the 30S subunit in the 70S ribosome.

Its function is as follows. One of the primary rRNA binding proteins. Required for association of the 30S and 50S subunits to form the 70S ribosome, for tRNA binding and peptide bond formation. It has been suggested to have peptidyltransferase activity; this is somewhat controversial. Makes several contacts with the 16S rRNA in the 70S ribosome. The protein is Large ribosomal subunit protein uL2 of Xanthobacter autotrophicus (strain ATCC BAA-1158 / Py2).